Reading from the N-terminus, the 87-residue chain is MIIKVRVIPNSKRNEVVSRVGSILRVKITAPAIEGRANEELCDFLSDFFDVKRSMIFLRKGERGREKTIEVLGRLEEELNEVLDTIP.

It belongs to the UPF0235 family.

This Endomicrobium trichonymphae protein is UPF0235 protein TGRD_618.